Here is a 451-residue protein sequence, read N- to C-terminus: Secreted RxLR effector protein 70 (451 aa).

The first 17 residues, 1-17 (MRGAYYIITALLVVASS), serve as a signal peptide directing secretion. The RxLR-dEER signature appears at 48 to 65 (RFLRESRDVHDDLANEER). Residues 303–336 (DAPSNSKHTLGGNKDSSSATTLHKHSKGLSSRPF) form a disordered region. Over residues 305-323 (PSNSKHTLGGNKDSSSATT) the composition is skewed to polar residues.

This sequence belongs to the RxLR effector family.

It is found in the secreted. The protein resides in the host nucleus. In terms of biological role, secreted effector that completely suppresses the host cell death induced by cell death-inducing proteins. The sequence is that of Secreted RxLR effector protein 70 from Plasmopara viticola (Downy mildew of grapevine).